The following is a 118-amino-acid chain: Large ribosomal subunit protein uL18 (118 aa).

The protein belongs to the universal ribosomal protein uL18 family. Part of the 50S ribosomal subunit; part of the 5S rRNA/L5/L18/L25 subcomplex. Contacts the 5S and 23S rRNAs.

In terms of biological role, this is one of the proteins that bind and probably mediate the attachment of the 5S RNA into the large ribosomal subunit, where it forms part of the central protuberance. The sequence is that of Large ribosomal subunit protein uL18 from Rickettsia peacockii (strain Rustic).